Here is a 240-residue protein sequence, read N- to C-terminus: UDP-2,3-diacylglucosamine hydrolase (240 aa).

Mn(2+)-binding residues include Asp8, His10, Asp41, Asn79, and His114. 79–80 is a binding site for substrate; sequence NR. Residues Asp122, Ser160, Asn164, Lys167, and His195 each coordinate substrate. The Mn(2+) site is built by His195 and His197.

Belongs to the LpxH family. It depends on Mn(2+) as a cofactor.

It localises to the cell inner membrane. It carries out the reaction UDP-2-N,3-O-bis[(3R)-3-hydroxytetradecanoyl]-alpha-D-glucosamine + H2O = 2-N,3-O-bis[(3R)-3-hydroxytetradecanoyl]-alpha-D-glucosaminyl 1-phosphate + UMP + 2 H(+). It functions in the pathway glycolipid biosynthesis; lipid IV(A) biosynthesis; lipid IV(A) from (3R)-3-hydroxytetradecanoyl-[acyl-carrier-protein] and UDP-N-acetyl-alpha-D-glucosamine: step 4/6. Hydrolyzes the pyrophosphate bond of UDP-2,3-diacylglucosamine to yield 2,3-diacylglucosamine 1-phosphate (lipid X) and UMP by catalyzing the attack of water at the alpha-P atom. Involved in the biosynthesis of lipid A, a phosphorylated glycolipid that anchors the lipopolysaccharide to the outer membrane of the cell. The protein is UDP-2,3-diacylglucosamine hydrolase of Salmonella arizonae (strain ATCC BAA-731 / CDC346-86 / RSK2980).